The chain runs to 212 residues: Acyl-homoserine-lactone synthase (212 aa).

The protein belongs to the autoinducer synthase family.

It carries out the reaction a fatty acyl-[ACP] + S-adenosyl-L-methionine = an N-acyl-L-homoserine lactone + S-methyl-5'-thioadenosine + holo-[ACP] + H(+). Required for the synthesis of OHHL (N-(3-oxohexanoyl)-L-homoserine lactone), an autoinducer molecule which binds to ExpR and thus acts in virulence (soft rot disease) through the activation of genes for plant tissue macerating enzymes. The protein is Acyl-homoserine-lactone synthase (expI) of Dickeya dadantii (strain 3937) (Erwinia chrysanthemi (strain 3937)).